Reading from the N-terminus, the 342-residue chain is Aldo-keto reductase pigE (342 aa).

The first 27 residues, 1–27 (MGSISPKTRFPIVLGAGLIGSPGLFEG), serve as a signal peptide directing secretion. D52 serves as a coordination point for NADP(+). Catalysis depends on Y57, which acts as the Proton donor. Positions 182 and 236 each coordinate NADP(+). N271 is a glycosylation site (N-linked (GlcNAc...) asparagine).

This sequence belongs to the aldo/keto reductase family. Aldo/keto reductase 2 subfamily.

Its pathway is secondary metabolite biosynthesis. Its function is as follows. Aldo-keto reductase; part of the gene cluster that mediates the biosynthesis of azaphilone pigments (MonAzPs), a complex mixture of compounds with a common azaphilone skeleton very widely used as food colorants. Within the pathway, pigE is involved in the dehydration of the C-11 alcohol followed by the reduction of the C6(7) double bond which increases the electrophilicity of the C-5 ketone of the resulting acyl benzopyran and allows the intramolecular Knoevenagel aldol condensation with the C-20 enol of the side chain to yield the characteristic linear tricyclic carbon skeletons of the yellow pigments. The first step of the pathway is performed by the nrPKS pigA that forms the hexaketide precursor from successive condensations of five malonyl-CoA units, with a simple acetyl-CoA starter unit. The role of esterase pigG is not clear, but it may play at most a supplementary role in the formation of the benzaldehyde produced by the pigA nrPKS. This very reactive benzaldehyde is intercepted by the pigC ketoreductase that to provide the first stable enzyme-free MonAzPs intermediate, 6-(4-hydroxy-2-oxopentyl)-3-methyl-2,4-dioxocyclohexane carbaldehyde, also known as M7PKS-1. The FAD-dependent monooxygenase pigN hydroxylates M7PKS-1 at C-4, which triggers the formation of the pyran ring. PigJ, pigK and pigD are involved in the acetylation of the pyran ring. PigJ and pigK form the two subunits of a dedicated fungal FAS that produces the side chain fatty acyl moiety of MonAzPs and pigD transfers the fatty acyl chain to the C-4 alcohol. PigM and pigO are involved in the elimination of the omega-1 alcohol. PigM acts as an O-acetyltransferase that synthesizes the putative O-11 acetyl intermediate whereas pigO eliminates acetic acid to yield an intermediate with a C10(11) double bond. The dehydration of the C-11 alcohol followed by the reduction of the C6(7) double bond by the NAD(P)H-dependent oxidoreductase pigE increases the electrophilicity of the C-5 ketone of the resulting acyl benzopyran. This in turn sets up the C-5 ketone for an intramolecular Knoevenagel aldol condensation with the C-20 enol of the side chain. This condensation affords the characteristic linear tricyclic carbon skeletons of the yellow pigments that serve as the common precursors for the classical yellow pigments monascin and ankaflavin, orange pigments rubopunctatin and monascorubrin, and red pigments ribropunctamine and monascorubramine. The FAD-dependent oxidoreductase pigF is especially invoved in the biosynthesis of orange and red pigments via desaturation of C6(7). The sequence is that of Aldo-keto reductase pigE from Monascus ruber (Mold).